The following is a 130-amino-acid chain: Gloverin (130 aa).

As to expression, hemolymph.

Its subcellular location is the secreted. Antibacterial protein active against Gram-negative bacteria. This is Gloverin from Hyalophora cecropia (Cecropia moth).